We begin with the raw amino-acid sequence, 485 residues long: Adenosylhomocysteinase (485 aa).

Residues Thr-64, Asp-139, and Glu-205 each contribute to the substrate site. 206–208 (TTT) contacts NAD(+). Substrate-binding residues include Lys-235 and Asp-239. Residues Asn-240, 269-274 (GYGDVG), Glu-292, Asn-327, 348-350 (IGH), and Asn-397 contribute to the NAD(+) site.

It belongs to the adenosylhomocysteinase family. Homotetramer. NAD(+) serves as cofactor.

It catalyses the reaction S-adenosyl-L-homocysteine + H2O = L-homocysteine + adenosine. It functions in the pathway amino-acid biosynthesis; L-homocysteine biosynthesis; L-homocysteine from S-adenosyl-L-homocysteine: step 1/1. Functionally, adenosylhomocysteine is a competitive inhibitor of S-adenosyl-L-methionine-dependent methyl transferase reactions; therefore adenosylhomocysteinase may play a key role in the control of methylations via regulation of the intracellular concentration of adenosylhomocysteine. This is Adenosylhomocysteinase (SAHH) from Catharanthus roseus (Madagascar periwinkle).